The chain runs to 500 residues: Glucose-6-phosphate 1-dehydrogenase (500 aa).

NADP(+) is bound by residues 18–25 (GASGDLSK), Arg-52, and Lys-155. Residues Lys-155, 185 to 189 (HYLGK), Glu-223, and Asp-242 contribute to the D-glucose 6-phosphate site. The Proton acceptor role is filled by His-247. An NADP(+)-binding site is contributed by Lys-338. Lys-341 lines the D-glucose 6-phosphate pocket. Residues Lys-347, Arg-351, and Arg-373 each contribute to the NADP(+) site. Gln-375 provides a ligand contact to D-glucose 6-phosphate. NADP(+) contacts are provided by residues 381-383 (YFK), 401-403 (DLT), and Tyr-483.

It belongs to the glucose-6-phosphate dehydrogenase family.

The protein resides in the cytoplasm. The protein localises to the cytosol. It catalyses the reaction D-glucose 6-phosphate + NADP(+) = 6-phospho-D-glucono-1,5-lactone + NADPH + H(+). It participates in carbohydrate degradation; pentose phosphate pathway; D-ribulose 5-phosphate from D-glucose 6-phosphate (oxidative stage): step 1/3. Its function is as follows. Catalyzes the rate-limiting step of the oxidative pentose-phosphate pathway, which represents a route for the dissimilation of carbohydrates besides glycolysis. The main function of this enzyme is to provide reducing power (NADPH) and pentose phosphates for fatty acid and nucleic acid synthesis. This chain is Glucose-6-phosphate 1-dehydrogenase, found in Schizosaccharomyces pombe (strain 972 / ATCC 24843) (Fission yeast).